The sequence spans 231 residues: Putative transglycosylase H16_A0665 (231 aa).

The helical transmembrane segment at 8–28 (FIKLLVLAVIGGALLAAIAIL) threads the bilayer.

It belongs to the glycosyltransferase 51 family.

It localises to the secreted. The protein localises to the membrane. It functions in the pathway cell wall biogenesis; peptidoglycan biosynthesis. In terms of biological role, cell wall formation. This Cupriavidus necator (strain ATCC 17699 / DSM 428 / KCTC 22496 / NCIMB 10442 / H16 / Stanier 337) (Ralstonia eutropha) protein is Putative transglycosylase H16_A0665.